Here is a 98-residue protein sequence, read N- to C-terminus: NADH-ubiquinone oxidoreductase chain 4L (98 aa).

A run of 3 helical transmembrane segments spans residues 2-22 (MMAVLNISLAFIFSLLGTLMF), 26-46 (LMSTLLCLEGMMLTLFIITTI), and 59-79 (IPIVILVFAACEAAVGLALLV).

This sequence belongs to the complex I subunit 4L family. As to quaternary structure, core subunit of respiratory chain NADH dehydrogenase (Complex I) which is composed of 45 different subunits.

The protein resides in the mitochondrion inner membrane. It catalyses the reaction a ubiquinone + NADH + 5 H(+)(in) = a ubiquinol + NAD(+) + 4 H(+)(out). Its function is as follows. Core subunit of the mitochondrial membrane respiratory chain NADH dehydrogenase (Complex I) which catalyzes electron transfer from NADH through the respiratory chain, using ubiquinone as an electron acceptor. Part of the enzyme membrane arm which is embedded in the lipid bilayer and involved in proton translocation. This Phodopus sungorus (Striped hairy-footed hamster) protein is NADH-ubiquinone oxidoreductase chain 4L (MT-ND4L).